Here is a 199-residue protein sequence, read N- to C-terminus: Holliday junction branch migration complex subunit RuvA (199 aa).

A domain I region spans residues 1-65; the sequence is MIASLRGKLL…DRGQRLFGFG (65 aa). The interval 66–144 is domain II; it reads SKKDRESFEL…KFEMFLNEGT (79 aa). Residues 145–155 are flexible linker; sequence TESSFVDRETD. Positions 155-199 are domain III; the sequence is DLATLALIQLGFDEKSATKQVADAKKLNPGLSASDIVKQVITGTR.

This sequence belongs to the RuvA family. As to quaternary structure, homotetramer. Forms an RuvA(8)-RuvB(12)-Holliday junction (HJ) complex. HJ DNA is sandwiched between 2 RuvA tetramers; dsDNA enters through RuvA and exits via RuvB. An RuvB hexamer assembles on each DNA strand where it exits the tetramer. Each RuvB hexamer is contacted by two RuvA subunits (via domain III) on 2 adjacent RuvB subunits; this complex drives branch migration. In the full resolvosome a probable DNA-RuvA(4)-RuvB(12)-RuvC(2) complex forms which resolves the HJ.

It localises to the cytoplasm. In terms of biological role, the RuvA-RuvB-RuvC complex processes Holliday junction (HJ) DNA during genetic recombination and DNA repair, while the RuvA-RuvB complex plays an important role in the rescue of blocked DNA replication forks via replication fork reversal (RFR). RuvA specifically binds to HJ cruciform DNA, conferring on it an open structure. The RuvB hexamer acts as an ATP-dependent pump, pulling dsDNA into and through the RuvAB complex. HJ branch migration allows RuvC to scan DNA until it finds its consensus sequence, where it cleaves and resolves the cruciform DNA. This chain is Holliday junction branch migration complex subunit RuvA, found in Leptospira biflexa serovar Patoc (strain Patoc 1 / Ames).